We begin with the raw amino-acid sequence, 493 residues long: UDP-N-acetylmuramoyl-L-alanyl-D-glutamate--2,6-diaminopimelate ligase (493 aa).

Residues Leu-30 and Ser-32 each coordinate UDP-N-acetyl-alpha-D-muramoyl-L-alanyl-D-glutamate. Position 117–123 (117–123 (GTNGKTT)) interacts with ATP. UDP-N-acetyl-alpha-D-muramoyl-L-alanyl-D-glutamate is bound by residues Asn-158, 159-160 (TT), Ser-186, Gln-192, and Arg-194. Lys-226 bears the N6-carboxylysine mark. Meso-2,6-diaminopimelate is bound by residues Arg-388, 412–415 (DNPR), Gly-463, and Glu-467. Residues 412-415 (DNPR) carry the Meso-diaminopimelate recognition motif motif.

The protein belongs to the MurCDEF family. MurE subfamily. The cofactor is Mg(2+). Carboxylation is probably crucial for Mg(2+) binding and, consequently, for the gamma-phosphate positioning of ATP.

Its subcellular location is the cytoplasm. It carries out the reaction UDP-N-acetyl-alpha-D-muramoyl-L-alanyl-D-glutamate + meso-2,6-diaminopimelate + ATP = UDP-N-acetyl-alpha-D-muramoyl-L-alanyl-gamma-D-glutamyl-meso-2,6-diaminopimelate + ADP + phosphate + H(+). It participates in cell wall biogenesis; peptidoglycan biosynthesis. Functionally, catalyzes the addition of meso-diaminopimelic acid to the nucleotide precursor UDP-N-acetylmuramoyl-L-alanyl-D-glutamate (UMAG) in the biosynthesis of bacterial cell-wall peptidoglycan. This is UDP-N-acetylmuramoyl-L-alanyl-D-glutamate--2,6-diaminopimelate ligase from Vibrio parahaemolyticus serotype O3:K6 (strain RIMD 2210633).